The following is a 201-amino-acid chain: ATP-dependent Clp protease proteolytic subunit (201 aa).

The active-site Nucleophile is the Ser-98. His-123 is a catalytic residue.

Belongs to the peptidase S14 family. Fourteen ClpP subunits assemble into 2 heptameric rings which stack back to back to give a disk-like structure with a central cavity, resembling the structure of eukaryotic proteasomes.

The protein localises to the cytoplasm. The enzyme catalyses Hydrolysis of proteins to small peptides in the presence of ATP and magnesium. alpha-casein is the usual test substrate. In the absence of ATP, only oligopeptides shorter than five residues are hydrolyzed (such as succinyl-Leu-Tyr-|-NHMec, and Leu-Tyr-Leu-|-Tyr-Trp, in which cleavage of the -Tyr-|-Leu- and -Tyr-|-Trp bonds also occurs).. Cleaves peptides in various proteins in a process that requires ATP hydrolysis. Has a chymotrypsin-like activity. Plays a major role in the degradation of misfolded proteins. The protein is ATP-dependent Clp protease proteolytic subunit of Rickettsia canadensis (strain McKiel).